A 361-amino-acid chain; its full sequence is Serine/threonine-protein kinase SRK2B (361 aa).

One can recognise a Protein kinase domain in the interval 4-260 (YELVKDIGAG…IGDIKKHPWF (257 aa)). ATP is bound by residues 10–18 (IGAGNFGVA) and Lys-33. The active-site Proton acceptor is Asp-123. Ser-154 carries the phosphoserine modification. The tract at residues 311–361 (AFGWGGGEDAEGKEEDAEEEVEEVEEEEDEEDEYDKTVKQVHASMGEVRVS) is disordered. A compositionally biased stretch (acidic residues) spans 318–344 (EDAEGKEEDAEEEVEEVEEEEDEEDEY).

This sequence belongs to the protein kinase superfamily. Ser/Thr protein kinase family. In terms of tissue distribution, expressed in seedlings.

It carries out the reaction L-seryl-[protein] + ATP = O-phospho-L-seryl-[protein] + ADP + H(+). The enzyme catalyses L-threonyl-[protein] + ATP = O-phospho-L-threonyl-[protein] + ADP + H(+). The chain is Serine/threonine-protein kinase SRK2B (SRK2B) from Arabidopsis thaliana (Mouse-ear cress).